Here is a 200-residue protein sequence, read N- to C-terminus: Rho-related protein racD (200 aa).

Residues Ala-20, Gly-22, Lys-23, Thr-24, Cys-25, Tyr-39, and Thr-42 each contribute to the GTP site. Mg(2+) is bound at residue Thr-24. 2 consecutive short sequence motifs (switch) follow at residues 33–44 (NEFPKDYVPTVF) and 64–82 (DTAG…YPNT). Position 42 (Thr-42) interacts with Mg(2+). Lys-123, Asp-125, and Ala-166 together coordinate GTP. A Cysteine methyl ester modification is found at Cys-197. Cys-197 carries the S-geranylgeranyl cysteine lipid modification. Residues 198-200 (ALL) constitute a propeptide, removed in mature form.

This sequence belongs to the small GTPase superfamily. Rho family. It depends on Mg(2+) as a cofactor.

The protein resides in the cell membrane. It localises to the cytoplasm. Its subcellular location is the cytoskeleton. The catalysed reaction is GTP + H2O = GDP + phosphate + H(+). Regulated by guanine nucleotide exchange factors (GEFs) which promote the exchange of bound GDP for free GTP, GTPase activating proteins (GAPs) which increase the GTP hydrolysis activity, and GDP dissociation inhibitors which inhibit the dissociation of the nucleotide from the GTPase. Functionally, small GTPase which cycles between active GTP-bound and inactive GDP-bound states. This chain is Rho-related protein racD, found in Entamoeba histolytica (strain ATCC 30459 / HM-1:IMSS / ABRM).